Here is a 187-residue protein sequence, read N- to C-terminus: UPF0301 protein ESA_00394 (187 aa).

It belongs to the UPF0301 (AlgH) family.

The protein is UPF0301 protein ESA_00394 of Cronobacter sakazakii (strain ATCC BAA-894) (Enterobacter sakazakii).